We begin with the raw amino-acid sequence, 925 residues long: Serine/threonine-protein kinase PLK4 (925 aa).

The Protein kinase domain occupies F12–M265. ATP contacts are provided by residues L18 to V26 and K41. K45 and K46 each carry N6-acetyllysine. D136 (proton acceptor) is an active-site residue. Disordered stretches follow at residues H262–M283 and K328–S394. The span at S330–F341 shows a compositional bias: low complexity. Positions C342 to N353 are enriched in polar residues. Positions R359–H369 are enriched in basic and acidic residues. A compositionally biased stretch (polar residues) spans R381 to K391. Phosphoserine is present on S400. The tract at residues E517–E538 is disordered. Residues L525 to S536 are compositionally biased toward basic and acidic residues. The Cryptic POLO box 1 (CPB1) domain maps to T547 to K660. Positions T661–P774 constitute a Cryptic POLO box 2 (CPB2) domain. S778 carries the post-translational modification Phosphoserine. A POLO box domain is found at Q841–N919.

The protein belongs to the protein kinase superfamily. Ser/Thr protein kinase family. CDC5/Polo subfamily. As to quaternary structure, homodimer. Interacts with CEP152 (via N-terminus). Interacts with CEP78; this interaction may be important for proper PLK4 localization to the centriole and PLK4-induced overduplication of centrioles. Interacts with CEP131. Interacts simultaneously with TENT5C and CEP192. Interacts with TENT5C; this interaction leads to the TENT5C recruitment in the centrosome. Interacts with CEP85; this interaction may be important in cell migration and centriole assembly. In terms of processing, ubiquitinated; leading to its degradation by the proteasome. Deubiquitinated by USP54; leading to PLK4 stabilization. Post-translationally, tyrosine-phosphorylated by TEC. Acetylation by KAT2A and KAT2B impairs kinase activity by shifting the kinase to an inactive conformation. Expressed in tissues associated with mitotic and meiotic cell division. Highly expressed in testis.

The protein resides in the cytoplasm. It localises to the cytoskeleton. It is found in the microtubule organizing center. Its subcellular location is the centrosome. The protein localises to the centriole. The protein resides in the nucleus. It localises to the nucleolus. It is found in the cleavage furrow. The catalysed reaction is L-seryl-[protein] + ATP = O-phospho-L-seryl-[protein] + ADP + H(+). The enzyme catalyses L-threonyl-[protein] + ATP = O-phospho-L-threonyl-[protein] + ADP + H(+). Its function is as follows. Serine/threonine-protein kinase that plays a central role in centriole duplication. Able to trigger procentriole formation on the surface of the parental centriole cylinder, leading to the recruitment of centriole biogenesis proteins such as SASS6, CPAP, CCP110, CEP135 and gamma-tubulin. When overexpressed, it is able to induce centrosome amplification through the simultaneous generation of multiple procentrioles adjoining each parental centriole during S phase. Phosphorylates 'Ser-151' of FBXW5 during the G1/S transition, leading to inhibit FBXW5 ability to ubiquitinate SASS6. Its central role in centriole replication suggests a possible role in tumorigenesis, centrosome aberrations being frequently observed in tumors. Phosphorylates CDC25C and CHEK2. Also involved in deuterosome-mediated centriole amplification in multiciliated that can generate more than 100 centrioles. Also involved in trophoblast differentiation by phosphorylating HAND1, leading to disrupt the interaction between HAND1 and MDFIC and activate HAND1. Required for the recruitment of STIL to the centriole and for STIL-mediated centriole amplification. Phosphorylates CEP131 at 'Ser-78' and PCM1 at 'Ser-372' which is essential for proper organization and integrity of centriolar satellites. The protein is Serine/threonine-protein kinase PLK4 of Mus musculus (Mouse).